Reading from the N-terminus, the 458-residue chain is Plant UBX domain-containing protein 2 (458 aa).

The interval 1–103 (MDDVKDKLKG…APQDGFDPYG (103 aa)) is disordered. The segment covering 44 to 54 (PIQNRFNSSQA) has biased composition (polar residues). Residues 56–70 (NPTPRPKPNPNPLPE) are compositionally biased toward pro residues. The segment covering 74–85 (SSSDQKISGSTR) has biased composition (polar residues). The C2H2-type; atypical zinc-finger motif lies at 121-143 (FECPICKNPFTSEEEVSVHVESC). The PUB domain occupies 181-248 (SSIDVLLRLF…EIWAVMDVPS (68 aa)). The 85-residue stretch at 349–433 (KRYKRSMIRV…ELVPSALIRF (85 aa)) folds into the UBX domain.

In terms of assembly, interacts with CDC48A in vitro and co-fractionates with membrane-associated but not soluble CDC48A in vivo.

It localises to the membrane. In terms of biological role, facilitates the interaction of SYP31 and CDC48A, thereby regulating an CDC48A membrane-associated function. Appears to act as a negative regulator mediating the powdery mildew-plant interaction. This Arabidopsis thaliana (Mouse-ear cress) protein is Plant UBX domain-containing protein 2.